Consider the following 360-residue polypeptide: Ferredoxin--NADP reductase 1 (360 aa).

FAD is bound by residues D43, Q51, Y56, A96, F141, D307, and S348.

Belongs to the ferredoxin--NADP reductase type 2 family. As to quaternary structure, homodimer. It depends on FAD as a cofactor.

It catalyses the reaction 2 reduced [2Fe-2S]-[ferredoxin] + NADP(+) + H(+) = 2 oxidized [2Fe-2S]-[ferredoxin] + NADPH. The polypeptide is Ferredoxin--NADP reductase 1 (Cupriavidus taiwanensis (strain DSM 17343 / BCRC 17206 / CCUG 44338 / CIP 107171 / LMG 19424 / R1) (Ralstonia taiwanensis (strain LMG 19424))).